A 170-amino-acid polypeptide reads, in one-letter code: Protein SprT (170 aa).

Positions 22–163 (LQQANLTLQT…RCRRCGKTLR (142 aa)) constitute a SprT-like domain. His78 is a Zn(2+) binding site. Glu79 is a catalytic residue. Residue His82 participates in Zn(2+) binding.

This sequence belongs to the SprT family. Zn(2+) is required as a cofactor.

It localises to the cytoplasm. This chain is Protein SprT, found in Pectobacterium carotovorum subsp. carotovorum (strain PC1).